Reading from the N-terminus, the 336-residue chain is Dihydroorotate dehydrogenase (quinone) (336 aa).

FMN is bound by residues 62 to 66 (AGLDK) and Thr-86. Residue Lys-66 coordinates substrate. 111-115 (NRMGF) is a binding site for substrate. FMN contacts are provided by Asn-139 and Asn-172. Asn-172 is a substrate binding site. The active-site Nucleophile is the Ser-175. Asn-177 is a substrate binding site. 2 residues coordinate FMN: Lys-217 and Thr-245. Residue 246–247 (NT) coordinates substrate. Residues Gly-268, Gly-297, and 318 to 319 (YS) contribute to the FMN site.

It belongs to the dihydroorotate dehydrogenase family. Type 2 subfamily. As to quaternary structure, monomer. It depends on FMN as a cofactor.

It is found in the cell membrane. It carries out the reaction (S)-dihydroorotate + a quinone = orotate + a quinol. Its pathway is pyrimidine metabolism; UMP biosynthesis via de novo pathway; orotate from (S)-dihydroorotate (quinone route): step 1/1. Catalyzes the conversion of dihydroorotate to orotate with quinone as electron acceptor. The sequence is that of Dihydroorotate dehydrogenase (quinone) from Salmonella choleraesuis (strain SC-B67).